We begin with the raw amino-acid sequence, 510 residues long: Aspartate kinase FUB3 (510 aa).

ACT domains lie at 372 to 440 (ILSN…VLPD) and 446 to 510 (LVGA…KNAI).

This sequence belongs to the aspartokinase family.

The catalysed reaction is L-aspartate + ATP = 4-phospho-L-aspartate + ADP. Its pathway is mycotoxin biosynthesis. In terms of biological role, aspartate kinase; part of the gene cluster that mediates the biosynthesis of fusaric acid, a mycotoxin with low to moderate toxicity to animals and humans, but with high phytotoxic properties. L-aspartate is suggested as fusaric acid amino acid precursor that is activated and further processed to O-acetyl-L-homoserine by cluster enzymes aspartate kinase FUB3 and homoserine O-acetyltransferase FUB5, as well as enzymes of the primary metabolism. The polyketide synthase (PKS) FUB1 generates the triketide trans-2-hexenal which is presumptively released by the hydrolase FUB4 and linked to the NRPS-bound amino acid precursor by NAD(P)-dependent dehydrogenase FUB6. FUB1, FUB4, and the non-canonical NRPS Fub8 may form an enzyme complex. Further processing of the NRPS-bound intermediate might be carried out by FUB6 and the sulfhydrylase FUB7, enabling a spontaneous electrocyclization to close the carbon backbone of fusaric acid. Dihydrofusaric acid is likely to be released via reduction by the thioester reductase (TR) domain of FUB8 whereupon the final oxidation to fusaric acid may (also) be performed by the FMN-dependent dehydrogenase FUB9. This Gibberella fujikuroi (strain CBS 195.34 / IMI 58289 / NRRL A-6831) (Bakanae and foot rot disease fungus) protein is Aspartate kinase FUB3.